Reading from the N-terminus, the 1370-residue chain is Major capsid protein (1370 aa).

It belongs to the herpesviridae major capsid protein family. In terms of assembly, homomultimer. Makes the hexons and eleven out of twelve pentons. Interacts with triplex proteins 1/TRX1 and 2/TRX2; adjacent capsomers are linked together in groups of three by triplexes, heterotrimeric complexes composed of one molecule of TRX1 and two molecules of TRX2. Interacts with scaffold protein; this interaction allows efficient MCP transport to the host nucleus. Interacts with capsid vertex component 2/CVC2. Interacts with the small capsomere-interacting protein/SCP.

It localises to the virion. The protein localises to the host nucleus. Self-assembles to form an icosahedral capsid with a T=16 symmetry, about 200 nm in diameter, and consisting of 150 hexons and 12 pentons (total of 162 capsomers). Hexons form the edges and faces of the capsid and are each composed of six MCP molecules. In contrast, one penton is found at each of the 12 vertices. Eleven of the pentons are MCP pentamers, while the last vertex is occupied by the portal complex. The capsid is surrounded by a layer of proteinaceous material designated the tegument which, in turn, is enclosed in an envelope of host cell-derived lipids containing virus-encoded glycoproteins. The chain is Major capsid protein from Human cytomegalovirus (strain AD169) (HHV-5).